The sequence spans 241 residues: Probable transcriptional regulatory protein FMG_0893 (241 aa).

This sequence belongs to the TACO1 family.

The protein localises to the cytoplasm. The polypeptide is Probable transcriptional regulatory protein FMG_0893 (Finegoldia magna (strain ATCC 29328 / DSM 20472 / WAL 2508) (Peptostreptococcus magnus)).